The sequence spans 231 residues: Ribonuclease P protein component 3 (231 aa).

It belongs to the eukaryotic/archaeal RNase P protein component 3 family. Consists of a catalytic RNA component and at least 4-5 protein subunits.

The protein resides in the cytoplasm. It catalyses the reaction Endonucleolytic cleavage of RNA, removing 5'-extranucleotides from tRNA precursor.. In terms of biological role, part of ribonuclease P, a protein complex that generates mature tRNA molecules by cleaving their 5'-ends. This is Ribonuclease P protein component 3 from Methanococcus maripaludis (strain C5 / ATCC BAA-1333).